The following is a 144-amino-acid chain: 3-hydroxyacyl-[acyl-carrier-protein] dehydratase FabZ (144 aa).

The active site involves histidine 51.

The protein belongs to the thioester dehydratase family. FabZ subfamily.

The protein resides in the cytoplasm. It catalyses the reaction a (3R)-hydroxyacyl-[ACP] = a (2E)-enoyl-[ACP] + H2O. Its function is as follows. Involved in unsaturated fatty acids biosynthesis. Catalyzes the dehydration of short chain beta-hydroxyacyl-ACPs and long chain saturated and unsaturated beta-hydroxyacyl-ACPs. The chain is 3-hydroxyacyl-[acyl-carrier-protein] dehydratase FabZ from Clostridium botulinum (strain Langeland / NCTC 10281 / Type F).